Reading from the N-terminus, the 456-residue chain is MNVPRETIAAIATAQGRGGVGIVRISGPLAGAAAKAISGRELKPRFAHYGPFLSEQEEVLDEGIVLYFPGPNSFTGEDVLELQGHGGPIVLDMLLQRCLELGCRLARPGEFSERAFLNDKLDLAQAEAIADLIEASSAQAARNALRSLQGAFSQRVYNLTEQLIALRIYVEAAIDFPEEEIDFLADGHVLSMLDAVRDELSTVLREAGQGALLRDGMTVVIAGRPNAGKSSLLNALAGREAAIVTDIAGTTRDILREHIHIDGMPLHVVDTAGLRDTEDQVEKIGVERALKAISEADRVLLVVDATAAEAADPFALWPEFLEQRPDPAKVTLIRNKADLTGEPIALETCDDGHVTISLSAMAAGSGLELLRDHLKACMGYEQTSESSFSARRRHLEALHYASAALEHGRAQLTLAGAGELLAEDLRQAQQSLGEITGAFSSDDLLGRIFSSFCIGK.

Residues arginine 24, glutamate 81, and lysine 120 each coordinate (6S)-5-formyl-5,6,7,8-tetrahydrofolate. The region spanning 216–379 is the TrmE-type G domain; sequence GMTVVIAGRP…LRDHLKACMG (164 aa). Asparagine 226 is a K(+) binding site. GTP-binding positions include 226–231, 245–251, 270–273, and 335–338; these read NAGKSS, TDIAGTT, DTAG, and NKAD. Serine 230 contributes to the Mg(2+) binding site. 3 residues coordinate K(+): threonine 245, isoleucine 247, and threonine 250. Threonine 251 contributes to the Mg(2+) binding site. Lysine 456 is a (6S)-5-formyl-5,6,7,8-tetrahydrofolate binding site.

Belongs to the TRAFAC class TrmE-Era-EngA-EngB-Septin-like GTPase superfamily. TrmE GTPase family. Homodimer. Heterotetramer of two MnmE and two MnmG subunits. K(+) is required as a cofactor.

It is found in the cytoplasm. Its function is as follows. Exhibits a very high intrinsic GTPase hydrolysis rate. Involved in the addition of a carboxymethylaminomethyl (cmnm) group at the wobble position (U34) of certain tRNAs, forming tRNA-cmnm(5)s(2)U34. This is tRNA modification GTPase MnmE from Pseudomonas fluorescens (strain ATCC BAA-477 / NRRL B-23932 / Pf-5).